Consider the following 422-residue polypeptide: L-2-hydroxyglutarate dehydrogenase (422 aa).

It belongs to the L2HGDH family. FAD serves as cofactor.

The protein resides in the cell inner membrane. The enzyme catalyses (S)-2-hydroxyglutarate + a quinone = a quinol + 2-oxoglutarate. It participates in amino-acid degradation. Functionally, catalyzes the dehydrogenation of L-2-hydroxyglutarate (L2HG) to alpha-ketoglutarate and couples to the respiratory chain by feeding electrons from the reaction into the membrane quinone pool. Functions in a L-lysine degradation pathway that proceeds via cadaverine, glutarate and L-2-hydroxyglutarate. Also displays some oxidase activity in vitro on L-2-hydroxyglutarate with O2 as the electron acceptor, but this activity is most likely not physiological. The protein is L-2-hydroxyglutarate dehydrogenase of Escherichia coli O17:K52:H18 (strain UMN026 / ExPEC).